Consider the following 375-residue polypeptide: MQDNSQTRVVVGMSGGVDSSVVALRLKQQGYDVIGVFMKNWDDTDENGVCTATEDYKDVAKVAAKIGIPYYSVNFEKEYWDRVFTYFLDEYKKGRTPNPDVICNKEIKFKAFLDYALELGADYIATGHYAQLTRDEAGHAHLMRAVDQNKDQTYFLSQLSTEQLDRVMFPIGDLVKPQVREIAKEAGLATAEKKDSMGICFIGEKGHFKDFLKTYLPAKAGDMMTVDGEIKGHHAGLMYYTIGQRKGLGIGGDGIDNEPWFVIGKDLQKNILYVGKGYHNPHLYATHLSASDIHWVNTIDRGSDFHCTAKFRYRQKDTGVTVHLNDDGQQVTVEFDDPARAITPGQAVVFYNGDECLGSAIIDAAYNQERELQLI.

Residues 12 to 19 and methionine 38 each bind ATP; that span reads GMSGGVDS. Residues 98–100 are interaction with target base in tRNA; it reads NPD. Residue cysteine 103 is the Nucleophile of the active site. Residues cysteine 103 and cysteine 200 are joined by a disulfide bond. Glycine 127 lines the ATP pocket. The segment at 150-152 is interaction with tRNA; sequence KDQ. The active-site Cysteine persulfide intermediate is cysteine 200. The segment at 312 to 313 is interaction with tRNA; that stretch reads RY.

It belongs to the MnmA/TRMU family.

The protein resides in the cytoplasm. The catalysed reaction is S-sulfanyl-L-cysteinyl-[protein] + uridine(34) in tRNA + AH2 + ATP = 2-thiouridine(34) in tRNA + L-cysteinyl-[protein] + A + AMP + diphosphate + H(+). Functionally, catalyzes the 2-thiolation of uridine at the wobble position (U34) of tRNA, leading to the formation of s(2)U34. The protein is tRNA-specific 2-thiouridylase MnmA of Levilactobacillus brevis (strain ATCC 367 / BCRC 12310 / CIP 105137 / JCM 1170 / LMG 11437 / NCIMB 947 / NCTC 947) (Lactobacillus brevis).